The sequence spans 404 residues: Acetate kinase (404 aa).

A Mg(2+)-binding site is contributed by Asn7. Lys14 serves as a coordination point for ATP. Arg98 provides a ligand contact to substrate. Residue Asp155 is the Proton donor/acceptor of the active site. Residues 214–218, 289–291, and 337–341 contribute to the ATP site; these read HLGNG, DLR, and GIGEN. Glu390 serves as a coordination point for Mg(2+).

Belongs to the acetokinase family. In terms of assembly, homodimer. Mg(2+) serves as cofactor. The cofactor is Mn(2+).

The protein localises to the cytoplasm. The enzyme catalyses acetate + ATP = acetyl phosphate + ADP. It participates in metabolic intermediate biosynthesis; acetyl-CoA biosynthesis; acetyl-CoA from acetate: step 1/2. Its function is as follows. Catalyzes the formation of acetyl phosphate from acetate and ATP. Can also catalyze the reverse reaction. The sequence is that of Acetate kinase from Rippkaea orientalis (strain PCC 8801 / RF-1) (Cyanothece sp. (strain PCC 8801)).